A 155-amino-acid chain; its full sequence is Small ribosomal subunit protein bS6 (155 aa).

The tract at residues 94 to 155 (EKHEEGPSAM…RPRRPREDRV (62 aa)) is disordered.

It belongs to the bacterial ribosomal protein bS6 family.

Functionally, binds together with bS18 to 16S ribosomal RNA. The polypeptide is Small ribosomal subunit protein bS6 (Rhizobium johnstonii (strain DSM 114642 / LMG 32736 / 3841) (Rhizobium leguminosarum bv. viciae)).